Here is a 130-residue protein sequence, read N- to C-terminus: Holo-[acyl-carrier-protein] synthase (130 aa).

Asp9 and Glu58 together coordinate Mg(2+).

It belongs to the P-Pant transferase superfamily. AcpS family. Mg(2+) is required as a cofactor.

The protein localises to the cytoplasm. It catalyses the reaction apo-[ACP] + CoA = holo-[ACP] + adenosine 3',5'-bisphosphate + H(+). In terms of biological role, transfers the 4'-phosphopantetheine moiety from coenzyme A to a Ser of acyl-carrier-protein. The polypeptide is Holo-[acyl-carrier-protein] synthase (Mycolicibacterium smegmatis (strain ATCC 700084 / mc(2)155) (Mycobacterium smegmatis)).